Consider the following 365-residue polypeptide: Chorismate synthase (365 aa).

NADP(+)-binding residues include R48 and R54. Residues 125–127, 237–238, G277, 292–296, and R318 each bind FMN; these read RAS, NA, and KPTSS.

The protein belongs to the chorismate synthase family. Homotetramer. The cofactor is FMNH2.

The catalysed reaction is 5-O-(1-carboxyvinyl)-3-phosphoshikimate = chorismate + phosphate. Its pathway is metabolic intermediate biosynthesis; chorismate biosynthesis; chorismate from D-erythrose 4-phosphate and phosphoenolpyruvate: step 7/7. Functionally, catalyzes the anti-1,4-elimination of the C-3 phosphate and the C-6 proR hydrogen from 5-enolpyruvylshikimate-3-phosphate (EPSP) to yield chorismate, which is the branch point compound that serves as the starting substrate for the three terminal pathways of aromatic amino acid biosynthesis. This reaction introduces a second double bond into the aromatic ring system. The protein is Chorismate synthase of Polaromonas sp. (strain JS666 / ATCC BAA-500).